The sequence spans 79 residues: Acyl carrier protein (79 aa).

The 76-residue stretch at 2–77 folds into the Carrier domain; it reads STIEERVKKI…QAIDYVKVHV (76 aa). O-(pantetheine 4'-phosphoryl)serine is present on Ser-37.

The protein belongs to the acyl carrier protein (ACP) family. 4'-phosphopantetheine is transferred from CoA to a specific serine of apo-ACP by AcpS. This modification is essential for activity because fatty acids are bound in thioester linkage to the sulfhydryl of the prosthetic group.

It is found in the cytoplasm. The protein operates within lipid metabolism; fatty acid biosynthesis. In terms of biological role, carrier of the growing fatty acid chain in fatty acid biosynthesis. The sequence is that of Acyl carrier protein from Xanthomonas albilineans.